The chain runs to 185 residues: Ribosome-recycling factor (185 aa).

Belongs to the RRF family.

The protein localises to the cytoplasm. In terms of biological role, responsible for the release of ribosomes from messenger RNA at the termination of protein biosynthesis. May increase the efficiency of translation by recycling ribosomes from one round of translation to another. This Geobacter sulfurreducens (strain ATCC 51573 / DSM 12127 / PCA) protein is Ribosome-recycling factor.